The sequence spans 535 residues: Transmembrane protein 151 homolog (535 aa).

3 helical membrane-spanning segments follow: residues 27-47 (GYGK…YATY), 73-93 (YNFV…MECW), and 254-274 (PWFL…SWPL). Residues 498 to 535 (ASISHSSSKDLKSLTLKNNNGAANNNNNNNNENPEEQP) form a disordered region. The span at 510 to 529 (SLTLKNNNGAANNNNNNNNE) shows a compositional bias: low complexity.

It belongs to the TMEM151 family.

The protein resides in the membrane. The sequence is that of Transmembrane protein 151 homolog from Caenorhabditis briggsae.